Consider the following 156-residue polypeptide: Transcriptional repressor NrdR (156 aa).

Residues 3-34 (CPFCHSDNDKVQDSRTAEAGYVVRRKRLCQTC) fold into a zinc finger. Residues 49–139 (VRVVKSDETR…VYRDFDDAKD (91 aa)) form the ATP-cone domain.

This sequence belongs to the NrdR family. Zn(2+) serves as cofactor.

Negatively regulates transcription of bacterial ribonucleotide reductase nrd genes and operons by binding to NrdR-boxes. The polypeptide is Transcriptional repressor NrdR (Rhodopirellula baltica (strain DSM 10527 / NCIMB 13988 / SH1)).